Here is a 425-residue protein sequence, read N- to C-terminus: UDP-N-acetylglucosamine 1-carboxyvinyltransferase (425 aa).

23-24 (KN) contributes to the phosphoenolpyruvate binding site. R100 contributes to the UDP-N-acetyl-alpha-D-glucosamine binding site. C124 serves as the catalytic Proton donor. C124 carries the post-translational modification 2-(S-cysteinyl)pyruvic acid O-phosphothioketal. Residues D313 and I335 each coordinate UDP-N-acetyl-alpha-D-glucosamine.

The protein belongs to the EPSP synthase family. MurA subfamily.

Its subcellular location is the cytoplasm. The enzyme catalyses phosphoenolpyruvate + UDP-N-acetyl-alpha-D-glucosamine = UDP-N-acetyl-3-O-(1-carboxyvinyl)-alpha-D-glucosamine + phosphate. The protein operates within cell wall biogenesis; peptidoglycan biosynthesis. Its function is as follows. Cell wall formation. Adds enolpyruvyl to UDP-N-acetylglucosamine. The chain is UDP-N-acetylglucosamine 1-carboxyvinyltransferase from Wolbachia pipientis wMel.